The following is a 141-amino-acid chain: Protein wingless (141 aa).

Serine 3 is lipidated: O-palmitoleoyl serine; by PORCN. Residues 40–49 (TDLEAPTQRN) are compositionally biased toward polar residues. The interval 40–61 (TDLEAPTQRNDAAPHRAPRRER) is disordered. A disulfide bridge links cysteine 107 with cysteine 122. Asparagine 108 and asparagine 138 each carry an N-linked (GlcNAc...) asparagine glycan.

The protein belongs to the Wnt family. In terms of processing, palmitoleoylated by porcupine. The lipid group functions as a sorting signal, targeting the ligand to polarized vesicles that transport wg to unique sites at the cell surface. Depalmitoleoylated by notum, leading to inhibit Wnt signaling pathway.

Its subcellular location is the secreted. The protein resides in the extracellular space. It is found in the extracellular matrix. Its function is as follows. Segment polarity protein. Binds to the frizzled seven-transmembrane receptors. This protein is probably a growth factor. The protein is Protein wingless (WG) of Manduca sexta (Tobacco hawkmoth).